A 148-amino-acid polypeptide reads, in one-letter code: Lysozyme C-2 (148 aa).

Positions 1 to 18 are cleaved as a signal peptide; that stretch reads MKTLLTLGLLLLSVTAQA. Residues 19–148 enclose the C-type lysozyme domain; that stretch reads KVYERCEFAR…LSQYIRNCGV (130 aa). Intrachain disulfides connect Cys24-Cys146, Cys48-Cys134, Cys83-Cys99, and Cys95-Cys113. Catalysis depends on residues Glu53 and Asp71.

Belongs to the glycosyl hydrolase 22 family. As to quaternary structure, monomer. As to expression, expressed weakly in myeloblasts, moderately in immature macrophages, and strongly in both mature macrophages and macrophage-rich tissues.

It localises to the secreted. The enzyme catalyses Hydrolysis of (1-&gt;4)-beta-linkages between N-acetylmuramic acid and N-acetyl-D-glucosamine residues in a peptidoglycan and between N-acetyl-D-glucosamine residues in chitodextrins.. Lysozymes have primarily a bacteriolytic function; those in tissues and body fluids are associated with the monocyte-macrophage system and enhance the activity of immunoagents. Lyz2 is active against a range of Gram-positive and Gram-negative bacteria. More effective than Lyz1 in killing Gram-negative bacteria. Lyz1 and Lyz2 are equally effective in killing Gram-positive bacteria. The sequence is that of Lysozyme C-2 (Lyz2) from Mus musculus (Mouse).